The chain runs to 1033 residues: Ubiquitin carboxyl-terminal hydrolase 48 (1033 aa).

The USP domain occupies 89–419; the sequence is VGLTNLGATC…NAYMLVYRLQ (331 aa). Residue Cys-98 is the Nucleophile of the active site. The active-site Proton acceptor is His-351. 3 consecutive DUSP domains span residues 457-552, 567-690, and 710-823; these read QSVA…KALC, NQLN…NKEC, and MMAS…RTRA. Residues 610-639 form a disordered region; sequence EQDEDAEHSNGKLNGNAPNKDEVNEEKREE. A disordered region spans residues 878–920; it reads APELNVSSSEAEEEREENKPEGEQDPDFNQSNGGAKRQKLSHQ. The 77-residue stretch at 931–1007 folds into the Ubiquitin-like domain; that stretch reads RRSTRHRKVR…ILLKADEPIA (77 aa).

This sequence belongs to the peptidase C19 family.

The protein resides in the cytoplasm. Its subcellular location is the nucleus. It carries out the reaction Thiol-dependent hydrolysis of ester, thioester, amide, peptide and isopeptide bonds formed by the C-terminal Gly of ubiquitin (a 76-residue protein attached to proteins as an intracellular targeting signal).. Its function is as follows. Recognizes and hydrolyzes the peptide bond at the C-terminal Gly of ubiquitin. Involved in the processing of poly-ubiquitin precursors as well as that of ubiquitinated proteins. The chain is Ubiquitin carboxyl-terminal hydrolase 48 (USP48) from Gallus gallus (Chicken).